The chain runs to 427 residues: Putative tyrosine recombinase XerC (427 aa).

In terms of domain architecture, Core-binding (CB) spans 1–81 (MTPQQLTEEY…HLRTIWGYAI (81 aa)). Residues 116 to 305 (RARSWLSMQV…DYDHMRAVLH (190 aa)) form the Tyr recombinase domain. Catalysis depends on residues arginine 156, lysine 183, histidine 256, arginine 259, and histidine 283. Tyrosine 292 (O-(3'-phospho-DNA)-tyrosine intermediate) is an active-site residue. 2 disordered regions span residues 323–384 (SGSP…PPDT) and 401–427 (RAAT…DSLA). Positions 350–362 (ARTEPSEPREHTQ) are enriched in basic and acidic residues. Residues 402-413 (AATASAVPAATS) are compositionally biased toward low complexity.

The protein belongs to the 'phage' integrase family.

It is found in the cytoplasm. Its function is as follows. Site-specific tyrosine recombinase, which acts by catalyzing the cutting and rejoining of the recombining DNA molecules. This Pseudomonas aeruginosa protein is Putative tyrosine recombinase XerC.